A 148-amino-acid chain; its full sequence is UPF0756 membrane protein YeaL (148 aa).

The next 4 helical transmembrane spans lie at 14-34 (ALGF…LIIV), 51-71 (LTIG…SGSL), 80-100 (FFNW…WLGG), and 121-141 (VLGV…AGLV).

The protein belongs to the UPF0756 family.

The protein localises to the cell membrane. This is UPF0756 membrane protein YeaL from Escherichia fergusonii (strain ATCC 35469 / DSM 13698 / CCUG 18766 / IAM 14443 / JCM 21226 / LMG 7866 / NBRC 102419 / NCTC 12128 / CDC 0568-73).